The primary structure comprises 396 residues: GTPase Obg (396 aa).

Residues 1–159 (MKFVDEASIY…RTLKLEMKVL (159 aa)) enclose the Obg domain. Positions 120–146 (GGHHGLGNTRFKSSTNRAPRQTTKGTV) are disordered. Residues 129–144 (RFKSSTNRAPRQTTKG) are compositionally biased toward polar residues. The OBG-type G domain occupies 160 to 333 (ADVGLLGLPN…LCLDLMTALD (174 aa)). GTP contacts are provided by residues 166–173 (GLPNAGKS), 191–195 (FTTLV), 213–216 (DIPG), 283–286 (NKTD), and 314–316 (SAI). Mg(2+) contacts are provided by Ser173 and Thr193.

It belongs to the TRAFAC class OBG-HflX-like GTPase superfamily. OBG GTPase family. As to quaternary structure, monomer. The cofactor is Mg(2+).

It localises to the cytoplasm. Functionally, an essential GTPase which binds GTP, GDP and possibly (p)ppGpp with moderate affinity, with high nucleotide exchange rates and a fairly low GTP hydrolysis rate. Plays a role in control of the cell cycle, stress response, ribosome biogenesis and in those bacteria that undergo differentiation, in morphogenesis control. This chain is GTPase Obg, found in Marinomonas sp. (strain MWYL1).